The chain runs to 168 residues: GTP-dependent dephospho-CoA kinase (168 aa).

GTP is bound by residues D49, V50, V51, D68, K70, and E120.

Belongs to the GTP-dependent DPCK family.

It catalyses the reaction 3'-dephospho-CoA + GTP = GDP + CoA + H(+). It functions in the pathway cofactor biosynthesis; coenzyme A biosynthesis. Its function is as follows. Catalyzes the GTP-dependent phosphorylation of the 3'-hydroxyl group of dephosphocoenzyme A to form coenzyme A (CoA). The chain is GTP-dependent dephospho-CoA kinase from Pyrobaculum neutrophilum (strain DSM 2338 / JCM 9278 / NBRC 100436 / V24Sta) (Thermoproteus neutrophilus).